A 97-amino-acid chain; its full sequence is U-reduvitoxin-Pr10a (97 aa).

Positions 1 to 18 (MKTALFLVFALAFIAVEG) are cleaved as a signal peptide. Pacifastin domains follow at residues 22-59 (KACS…CPPR) and 62-97 (KQSC…RLCW). 3 disulfide bridges follow: Cys-24/Cys-42, Cys-37/Cys-56, and Cys-40/Cys-51. The tract at residues 57-59 (PPR) is pro-Pro-Arg motif necessary for proteolytic processing. 3 cysteine pairs are disulfide-bonded: Cys-65/Cys-82, Cys-77/Cys-96, and Cys-80/Cys-91.

The protein belongs to the protease inhibitor I19 family. Expressed by the venom gland.

Its subcellular location is the secreted. In terms of biological role, inhibits trypsin activity and prophenoloxidase (PPO) activation, an enzyme essential for both clotting and insect innate immune responses. It does not inhibit activity of chymotrypsin and protease K, and has no effect on phenoloxidase (PO) activity. The chain is U-reduvitoxin-Pr10a from Platymeris rhadamanthus (Red spot assassin bug).